A 1100-amino-acid polypeptide reads, in one-letter code: Tyrosine-protein kinase JAK3 (1100 aa).

The segment at 1–223 (MAPPSEETPL…RRTVVQALRR (223 aa)) is cytokine/interferon/growth hormone receptors. The residue at position 17 (S17) is a Phosphoserine. The region spanning 24–353 (GALHVLLPPR…GYFRLICDSR (330 aa)) is the FERM domain. Residues 372–472 (LCHGPITLDF…GTALNLTSCC (101 aa)) form the SH2; atypical domain. In terms of domain architecture, Protein kinase 1 spans 517–777 (LEWHENLGHG…AILRDLNGLI (261 aa)). Phosphotyrosine; by autocatalysis is present on Y781. The Protein kinase 2 domain maps to 818–1091 (LKYISLLGKG…PAFDTLSPQL (274 aa)). Residues 824 to 832 (LGKGNFGSV) and K851 each bind ATP. Y900 and Y935 each carry phosphotyrosine. Residue D945 is the Proton acceptor of the active site. Residues Y976 and Y977 each carry the phosphotyrosine; by autocatalysis modification.

It belongs to the protein kinase superfamily. Tyr protein kinase family. JAK subfamily. In terms of assembly, interacts with STAM2 and MYO18A. Interacts with SHB. Interacts with CD69. Autophosphorylated, leading to regulate its activity. IL2 promotes phosphorylation on tyrosine residues, including autophosphorylation on Tyr-781. Dephosphorylation of Tyr-976 and Tyr-977 by PTPN2 negatively regulates cytokine-mediated signaling. As to expression, in contrast with the ubiquitous expression of the other JAKs, JAK3 is predominantly expressed in hematopoietic tissues.

It localises to the endomembrane system. The protein resides in the cytoplasm. The catalysed reaction is L-tyrosyl-[protein] + ATP = O-phospho-L-tyrosyl-[protein] + ADP + H(+). Functionally, non-receptor tyrosine kinase involved in various processes such as cell growth, development, or differentiation. Mediates essential signaling events in both innate and adaptive immunity and plays a crucial role in hematopoiesis during T-cells development. In the cytoplasm, plays a pivotal role in signal transduction via its association with type I receptors sharing the common subunit gamma such as IL2R, IL4R, IL7R, IL9R, IL15R and IL21R. Following ligand binding to cell surface receptors, phosphorylates specific tyrosine residues on the cytoplasmic tails of the receptor, creating docking sites for STATs proteins. Subsequently, phosphorylates the STATs proteins once they are recruited to the receptor. Phosphorylated STATs then form homodimer or heterodimers and translocate to the nucleus to activate gene transcription. For example, upon IL2R activation by IL2, JAK1 and JAK3 molecules bind to IL2R beta (IL2RB) and gamma chain (IL2RG) subunits inducing the tyrosine phosphorylation of both receptor subunits on their cytoplasmic domain. Then, STAT5A and STAT5B are recruited, phosphorylated and activated by JAK1 and JAK3. Once activated, dimerized STAT5 translocates to the nucleus and promotes the transcription of specific target genes in a cytokine-specific fashion. This chain is Tyrosine-protein kinase JAK3, found in Rattus norvegicus (Rat).